We begin with the raw amino-acid sequence, 1181 residues long: DNA-directed RNA polymerase subunit beta' (1181 aa).

Cys68, Cys70, Cys83, and Cys86 together coordinate Zn(2+). Positions 457, 459, and 461 each coordinate Mg(2+). The Zn(2+) site is built by Cys802, Cys876, Cys883, and Cys886.

This sequence belongs to the RNA polymerase beta' chain family. In terms of assembly, the RNAP catalytic core consists of 2 alpha, 1 beta, 1 beta' and 1 omega subunit. When a sigma factor is associated with the core the holoenzyme is formed, which can initiate transcription. Requires Mg(2+) as cofactor. Zn(2+) serves as cofactor.

The catalysed reaction is RNA(n) + a ribonucleoside 5'-triphosphate = RNA(n+1) + diphosphate. Its function is as follows. DNA-dependent RNA polymerase catalyzes the transcription of DNA into RNA using the four ribonucleoside triphosphates as substrates. The protein is DNA-directed RNA polymerase subunit beta' of Syntrophomonas wolfei subsp. wolfei (strain DSM 2245B / Goettingen).